A 226-amino-acid polypeptide reads, in one-letter code: Cytidylate kinase (226 aa).

ATP is bound at residue Gly14–Thr22.

It belongs to the cytidylate kinase family. Type 1 subfamily.

It is found in the cytoplasm. It carries out the reaction CMP + ATP = CDP + ADP. The catalysed reaction is dCMP + ATP = dCDP + ADP. This Symbiobacterium thermophilum (strain DSM 24528 / JCM 14929 / IAM 14863 / T) protein is Cytidylate kinase.